The sequence spans 145 residues: MKEPKLSPKQERFIEEYFINDMNATKAAIAAGYSKNSASAIGAENLQKPAIRARIDARLKEINEKKILQANEVLEHLTRIALGQEKEQVLMGIGKGAETKTHVEVSAKDRIKALELLGKAHAVFTDKQKVETNQVIIVDDSGDAE.

A helix-turn-helix (HTH) region spans residues 23–48; sequence NATKAAIAAGYSKNSASAIGAENLQK.

The protein belongs to the SPP1-like small terminase family. In terms of assembly, homodecamer. Interacts with the terminase large subunit gp2; the active complex is probably composed of a one monomer of gp2 and two or more decamers of gp1.

Its function is as follows. The terminase small subunit specifically recognizes the non-adjacent pacL and pacR packaging subsites and regulates the ATPase activity of the terminase large subunit. The terminase lies at a unique vertex of the procapsid and is composed of two subunits, a small terminase subunit involved in viral DNA recognition (packaging 'pac' sequence), and a large terminase subunit possessing endonucleolytic and ATPase activities. Both terminase subunits heterooligomerize and are docked on the portal protein to form the packaging machine. The terminase large subunit exhibits endonuclease activity and cleaves the viral genome concatemer once the capsid is full (headful packaging). Once the capsid is packaged with the DNA, the terminase complex is substituted by neck proteins. This Bacillus phage rho15 (Bacteriophage rho-15) protein is Terminase small subunit (1).